The sequence spans 220 residues: Cysteine-rich venom protein (220 aa).

The SCP domain maps to 20–147 (DLHNSLRRSV…AYKYFYVCQY (128 aa)). Intrachain disulfides connect Cys-56/Cys-134, Cys-73/Cys-148, Cys-129/Cys-145, Cys-167/Cys-174, Cys-170/Cys-179, Cys-183/Cys-215, Cys-192/Cys-209, and Cys-200/Cys-213. Residues 183-215 (CTREDEFINCNDLVKQGCQTDYLKSNCAASCFC) form the ShKT domain.

In terms of tissue distribution, expressed by the venom gland.

It is found in the secreted. Blocks contraction of smooth muscle elicited by high potassium-induced depolarization, but does not block caffeine-stimulated contraction. May target voltage-gated calcium channels in smooth muscle. The protein is Cysteine-rich venom protein of Echis coloratus (Carpet viper).